The primary structure comprises 402 residues: Deoxyguanosinetriphosphate triphosphohydrolase-like protein (402 aa).

Positions 20 to 39 (PAFSRGRLVPEPESPTRTPF) are disordered. The 145-residue stretch at 73–217 (RLTHTIEVAQ…AAIADDIAYN (145 aa)) folds into the HD domain.

Belongs to the dGTPase family. Type 2 subfamily.

The chain is Deoxyguanosinetriphosphate triphosphohydrolase-like protein from Brucella ovis (strain ATCC 25840 / 63/290 / NCTC 10512).